Reading from the N-terminus, the 233-residue chain is Zinc import ATP-binding protein ZnuC (233 aa).

One can recognise an ABC transporter domain in the interval 6-222; the sequence is IEFHNVSKKF…SDFSNALSSL (217 aa). 38–45 contributes to the ATP binding site; that stretch reads GPNGAGKT.

The protein belongs to the ABC transporter superfamily. Zinc importer (TC 3.A.1.15.5) family. As to quaternary structure, the complex is composed of two ATP-binding proteins (ZnuC), two transmembrane proteins (ZnuB) and a solute-binding protein (ZnuA).

It is found in the cell inner membrane. It catalyses the reaction Zn(2+)(out) + ATP(in) + H2O(in) = Zn(2+)(in) + ADP(in) + phosphate(in) + H(+)(in). Part of the ABC transporter complex ZnuABC involved in zinc import. Responsible for energy coupling to the transport system. The chain is Zinc import ATP-binding protein ZnuC from Rickettsia bellii (strain RML369-C).